The sequence spans 293 residues: MYNQRTISVCIIGRPNSGKSTLLNRIIGEKLSIVTPKVQTTRSIITGIITLKDTQVILYDTPGIFEPKGSLEKAMVRCAWSSLHSADLVMLIIDSLKPFDDVTHDILDKLRSLNIVPIFLLNKIDIESKYLDDIKAFLIGNHPDSLFFPISALSGKNINGLLEYITGKAQIAPWLYAEDDITDLPMRFIAAEITREQLFFNLQQELPYKLTVQTEKWEDLKDKSVKINQVIIVSRASYKTIILGKNGSKIREIGSKSRMQMERFFGFPVHLFLFVKVHELWENHPDFYQYMKI.

The Era-type G domain occupies 5–174 (RTISVCIIGR…ITGKAQIAPW (170 aa)). The G1 stretch occupies residues 13–20 (GRPNSGKS). 13–20 (GRPNSGKS) serves as a coordination point for GTP. The interval 39–43 (QTTRS) is G2. The interval 60–63 (DTPG) is G3. Residues 60-64 (DTPGI) and 122-125 (NKID) contribute to the GTP site. Residues 122-125 (NKID) are G4. A G5 region spans residues 150-152 (ISA). One can recognise a KH type-2 domain in the interval 202-279 (LQQELPYKLT…HLFLFVKVHE (78 aa)).

The protein belongs to the TRAFAC class TrmE-Era-EngA-EngB-Septin-like GTPase superfamily. Era GTPase family. Monomer.

Its subcellular location is the cytoplasm. The protein localises to the cell inner membrane. Its function is as follows. An essential GTPase that binds both GDP and GTP, with rapid nucleotide exchange. Plays a role in 16S rRNA processing and 30S ribosomal subunit biogenesis and possibly also in cell cycle regulation and energy metabolism. The protein is GTPase Era of Rickettsia akari (strain Hartford).